A 469-amino-acid chain; its full sequence is MSAPRTLYDKIWDDHLVNQQDDGTCLLYIDRHLVHEVTSPQAFEGLRMAGRKVRAPEKTLAVVDHNVPTSPDRHLGIKNEESRIQVEALARNAADFGVEYYSENDKRQGIVHIVGPEQGFTLPGMTIVCGDSHTSTHGAFGALAHGIGTSEVEHVLATQTLIQKKAKNMLVRVDGQLPPGVTAKDIILAIIGEIGTAGGTGHVIEFAGEAIRSLSMEGRMTICNMTIEGGARAGLIAPDETTFDYIKDKPRAPKGKAWDMALDYWKTLHTDEGAHYDRIVVLDAADLPPIVSWGSSPEDVISVQGAVPNPDDIQEETKRASKWRALDYMGLKPGTKITDIAVDRVFIGSCTNGRIEDLRAVAKVVEGRKVASTVSAMIVPGSGLVKEQAEAEGLDKIFKEAGFDWREPGCSMCLAMNDDRLKPGERCASTSNRNFEGRQGFKGRTHLVSPAMAAAAAVAGHFVDIREWK.

[4Fe-4S] cluster is bound by residues C350, C410, and C413.

This sequence belongs to the aconitase/IPM isomerase family. LeuC type 1 subfamily. Heterodimer of LeuC and LeuD. The cofactor is [4Fe-4S] cluster.

It catalyses the reaction (2R,3S)-3-isopropylmalate = (2S)-2-isopropylmalate. The protein operates within amino-acid biosynthesis; L-leucine biosynthesis; L-leucine from 3-methyl-2-oxobutanoate: step 2/4. Functionally, catalyzes the isomerization between 2-isopropylmalate and 3-isopropylmalate, via the formation of 2-isopropylmaleate. In Sinorhizobium fredii (strain NBRC 101917 / NGR234), this protein is 3-isopropylmalate dehydratase large subunit.